Reading from the N-terminus, the 306-residue chain is Glutathione transport system permease protein GsiC (306 aa).

Over 1-8 (MLNYVIKR) the chain is Cytoplasmic. Residues 9–29 (LLGLIPTLFIVSVLVFLFVHM) form a helical membrane-spanning segment. The Periplasmic segment spans residues 30–102 (LPGDPARLIA…SRFMPTLWLT (73 aa)). Residues 95–292 (FMPTLWLTIT…LEFILINLVV (198 aa)) enclose the ABC transmembrane type-1 domain. Residues 103–123 (ITSMVWAVIFGMAAGIIAAVW) traverse the membrane as a helical segment. The Cytoplasmic segment spans residues 124–134 (RNRWPDRLSMT). A helical transmembrane segment spans residues 135 to 155 (IAVSGISFPAFALGMFLIQVF). Over 156–168 (SVELGWLPTVGAD) the chain is Periplasmic. The chain crosses the membrane as a helical span at residues 169–189 (SWQHYILPSLTLGAAVAAVMA). Topologically, residues 190 to 228 (RFTRASFVDVLSEDYMRTARAKGVSETWVVLKHGLRNAM) are cytoplasmic. A helical membrane pass occupies residues 229-249 (IPVVTMMGLQFGFLLGGSIVV). At 250-277 (EKVFNWPGLGRLLVDSVEMRDYPVIQAE) the chain is on the periplasmic side. A helical membrane pass occupies residues 278-298 (ILLFSLEFILINLVVDVLYAA). Over 299 to 306 (INPAIRYK) the chain is Cytoplasmic.

The protein belongs to the binding-protein-dependent transport system permease family. The complex is composed of two ATP-binding proteins (GsiA), two transmembrane proteins (GsiC and GsiD) and a solute-binding protein (GsiB).

The protein localises to the cell inner membrane. Part of the ABC transporter complex GsiABCD involved in glutathione import. Probably responsible for the translocation of the substrate across the membrane. The sequence is that of Glutathione transport system permease protein GsiC from Shigella flexneri serotype 5b (strain 8401).